We begin with the raw amino-acid sequence, 311 residues long: MTDSESPTPKKSIPARFPKWLRQKLPLGRVFAQTDNTIKNKGLPTVCEEASCPNRTHCWSRHTATYLALGDACTRRCGFCDIDFTRNPLPPDPEEGAKIAESAKALGLKHIVITMVSRDDLEDGGASALVHIIETLHTELPTATIEVLASDFEGNIAALHHLLDTHIAIYNHNVETVERLTPFVRHKATYRRSLMMLENAAKYLPNLMTKSGIMVGLGEQESEVKQTLKDLADHGVKIVTIGQYLRPSRRHIPVKSYVSPETFDYYRSVGESLGLFIYAGPFVRSSFNADSVFEAMRQRETSTSSLLPNKD.

Cysteine 47, cysteine 52, cysteine 58, cysteine 73, cysteine 77, cysteine 80, and serine 286 together coordinate [4Fe-4S] cluster. The 218-residue stretch at 59–276 (WSRHTATYLA…RSVGESLGLF (218 aa)) folds into the Radical SAM core domain.

It belongs to the radical SAM superfamily. Lipoyl synthase family. Requires [4Fe-4S] cluster as cofactor.

The protein resides in the cytoplasm. The enzyme catalyses [[Fe-S] cluster scaffold protein carrying a second [4Fe-4S](2+) cluster] + N(6)-octanoyl-L-lysyl-[protein] + 2 oxidized [2Fe-2S]-[ferredoxin] + 2 S-adenosyl-L-methionine + 4 H(+) = [[Fe-S] cluster scaffold protein] + N(6)-[(R)-dihydrolipoyl]-L-lysyl-[protein] + 4 Fe(3+) + 2 hydrogen sulfide + 2 5'-deoxyadenosine + 2 L-methionine + 2 reduced [2Fe-2S]-[ferredoxin]. The protein operates within protein modification; protein lipoylation via endogenous pathway; protein N(6)-(lipoyl)lysine from octanoyl-[acyl-carrier-protein]: step 2/2. Its function is as follows. Catalyzes the radical-mediated insertion of two sulfur atoms into the C-6 and C-8 positions of the octanoyl moiety bound to the lipoyl domains of lipoate-dependent enzymes, thereby converting the octanoylated domains into lipoylated derivatives. The sequence is that of Lipoyl synthase from Chlamydia trachomatis serovar L2 (strain ATCC VR-902B / DSM 19102 / 434/Bu).